A 424-amino-acid chain; its full sequence is Serine hydroxymethyltransferase (424 aa).

Residues leucine 123 and 127 to 129 (GHL) each bind (6S)-5,6,7,8-tetrahydrofolate. Position 232 is an N6-(pyridoxal phosphate)lysine (lysine 232). Residue glutamate 245 participates in (6S)-5,6,7,8-tetrahydrofolate binding.

This sequence belongs to the SHMT family. As to quaternary structure, homodimer. Pyridoxal 5'-phosphate serves as cofactor.

The protein localises to the cytoplasm. It carries out the reaction (6R)-5,10-methylene-5,6,7,8-tetrahydrofolate + glycine + H2O = (6S)-5,6,7,8-tetrahydrofolate + L-serine. The protein operates within one-carbon metabolism; tetrahydrofolate interconversion. It functions in the pathway amino-acid biosynthesis; glycine biosynthesis; glycine from L-serine: step 1/1. Its function is as follows. Catalyzes the reversible interconversion of serine and glycine with tetrahydrofolate (THF) serving as the one-carbon carrier. This reaction serves as the major source of one-carbon groups required for the biosynthesis of purines, thymidylate, methionine, and other important biomolecules. Also exhibits THF-independent aldolase activity toward beta-hydroxyamino acids, producing glycine and aldehydes, via a retro-aldol mechanism. This Kocuria rhizophila (strain ATCC 9341 / DSM 348 / NBRC 103217 / DC2201) protein is Serine hydroxymethyltransferase.